Reading from the N-terminus, the 698-residue chain is Gametogenetin-binding protein 2 (698 aa).

The disordered stretch occupies residues 555-575 (CMADPGNRETSGNTTHTEFHR).

It is found in the cytoplasm. Its function is as follows. May be involved in spermatogenesis. The chain is Gametogenetin-binding protein 2 (GGNBP2) from Gallus gallus (Chicken).